We begin with the raw amino-acid sequence, 271 residues long: Protein FANTASTIC FOUR 1 (271 aa).

Residues 114 to 168 form the FAF domain; the sequence is NSFPPPLNSVNGFNNSRMVKSYKEDGRLVVQAIRVCSPPRCFVSERREGRLRLCL. Residues 174-255 are disordered; that stretch reads NSQDAEEEFE…KRRCNENGCE (82 aa). Over residues 177–224 the composition is skewed to acidic residues; that stretch reads DAEEEFEEEDEDDQYDAEEEEEEEEEEEEEEEEEEEEEEEEEEEDEEG. Basic residues predominate over residues 237-247; the sequence is GNKKVSNRPKR.

The protein belongs to the fantastic four family. Expressed in the shoot apex, stamens, anthers and young siliques. Detected in provascular and vascular tissue.

In terms of biological role, able to repress WUS when constitutively overexpressed, but have no effect on CLV3. The sequence is that of Protein FANTASTIC FOUR 1 (FAF1) from Arabidopsis thaliana (Mouse-ear cress).